Here is an 89-residue protein sequence, read N- to C-terminus: Cell division topological specificity factor (89 aa).

This sequence belongs to the MinE family.

Functionally, prevents the cell division inhibition by proteins MinC and MinD at internal division sites while permitting inhibition at polar sites. This ensures cell division at the proper site by restricting the formation of a division septum at the midpoint of the long axis of the cell. The sequence is that of Cell division topological specificity factor from Pectobacterium carotovorum subsp. carotovorum (strain PC1).